A 170-amino-acid chain; its full sequence is F107 fimbrial protein (170 aa).

An N-terminal signal peptide occupies residues 1–21 (MKRLVFISFVALSMTAGSAMA). A disulfide bridge connects residues C37 and C78.

This sequence belongs to the fimbrial protein family.

Its subcellular location is the fimbrium. Its function is as follows. Fimbriae (also called pili), polar filaments radiating from the surface of the bacterium to a length of 0.5-1.5 micrometers and numbering 100-300 per cell, enable bacteria to colonize the epithelium of specific host organs. In Escherichia coli, this protein is F107 fimbrial protein (fedA).